We begin with the raw amino-acid sequence, 701 residues long: Polyribonucleotide nucleotidyltransferase (701 aa).

2 residues coordinate Mg(2+): Asp-487 and Asp-493. The KH domain maps to 554 to 613 (PTMIAMKIDTDKIRDVIGKGGATIRAICEETKASIDIEDDGSIKIFGETKEAADAAKQRI). Positions 623 to 691 (GKIYVGKVER…NRGRIKLSIK (69 aa)) constitute an S1 motif domain.

It belongs to the polyribonucleotide nucleotidyltransferase family. Component of the RNA degradosome, which is a multiprotein complex involved in RNA processing and mRNA degradation. Mg(2+) is required as a cofactor.

Its subcellular location is the cytoplasm. It carries out the reaction RNA(n+1) + phosphate = RNA(n) + a ribonucleoside 5'-diphosphate. Its function is as follows. Involved in mRNA degradation. Catalyzes the phosphorolysis of single-stranded polyribonucleotides processively in the 3'- to 5'-direction. The chain is Polyribonucleotide nucleotidyltransferase from Pseudomonas putida (strain ATCC 47054 / DSM 6125 / CFBP 8728 / NCIMB 11950 / KT2440).